A 130-amino-acid chain; its full sequence is Small ribosomal subunit protein uS9 (130 aa).

The protein belongs to the universal ribosomal protein uS9 family.

In Bordetella pertussis (strain Tohama I / ATCC BAA-589 / NCTC 13251), this protein is Small ribosomal subunit protein uS9.